The sequence spans 480 residues: UDP-N-acetylmuramate--L-alanine ligase (480 aa).

122–128 (GTHGKTT) is an ATP binding site.

The protein belongs to the MurCDEF family.

Its subcellular location is the cytoplasm. It catalyses the reaction UDP-N-acetyl-alpha-D-muramate + L-alanine + ATP = UDP-N-acetyl-alpha-D-muramoyl-L-alanine + ADP + phosphate + H(+). It participates in cell wall biogenesis; peptidoglycan biosynthesis. In terms of biological role, cell wall formation. The chain is UDP-N-acetylmuramate--L-alanine ligase from Pseudomonas aeruginosa (strain LESB58).